The sequence spans 366 residues: Alcohol dehydrogenase (366 aa).

Zn(2+) is bound by residues Cys41, His62, Glu63, and Asp167.

The protein belongs to the zinc-containing alcohol dehydrogenase family. As to quaternary structure, homotetramer. Requires Zn(2+) as cofactor.

It carries out the reaction a primary alcohol + NAD(+) = an aldehyde + NADH + H(+). The enzyme catalyses a secondary alcohol + NAD(+) = a ketone + NADH + H(+). The catalysed reaction is (R,R)-butane-2,3-diol + NAD(+) = (R)-acetoin + NADH + H(+). It catalyses the reaction an aldehyde + NAD(+) + H2O = a carboxylate + NADH + 2 H(+). Its function is as follows. Multifunctional alcohol dehydrogenase exhibiting NAD(+)-dependent dehydrogenase activities for 2,3-butanediol, ethanol and acetaldehyde, and reductase activities for acetoin (NADH-dependent), and diacetyl and acetaldehyde (independently of whether NADH or NADPH is the reductant). The rate of oxidation of 2,3-butanediol is much higher than for the oxidation of ethanol. Has acetaldehyde dehydrogenase activity leading to acetate formation. May function in the release of excess reducing power in the absence of exogenous hydrogen acceptors such as oxygen. This chain is Alcohol dehydrogenase (adh), found in Cupriavidus necator (Alcaligenes eutrophus).